The sequence spans 366 residues: MRAIIIGIGQCGTKIADIFSLVDFEALAINTSRGDLEYLKHIPPDRRILIGESIVGGKGVNANPVLGREAMKRDLPMVMKKISSLVGFEDVDIFFLTFGFGGGTGAGGTPVLAEALKEEYPDSLVVAIGALPLKEEGIRPTINAAITIDKLSKIVDSIIAIDNNKLKESNEDISQAYERINYAIVERIASLLALIDVPGEQTLDASDLKFVLRAMGSFATVGYAKADATKIKSLSRLIIRSFENEGLYLDVNIESALYGLVAIHGPPEALKANEIFEALNELTQRIRGKQIFRGFYPDPREREVEVVTLLSGIYESKSIEEIVITAKKYAQEFLKAKEEGESKKKKLLSGLPDFDDIYPGEADDQS.

GTP contacts are provided by residues 10 to 14 (QCGTK), 103 to 105 (GTG), glutamate 136, asparagine 163, and asparagine 181.

The protein belongs to the CetZ family.

Its subcellular location is the cytoplasm. Its function is as follows. Involved in cell shape control. The chain is Tubulin-like protein CetZ from Pyrococcus furiosus (strain ATCC 43587 / DSM 3638 / JCM 8422 / Vc1).